The chain runs to 105 residues: Small ribosomal subunit protein uS10 (105 aa).

It belongs to the universal ribosomal protein uS10 family. As to quaternary structure, part of the 30S ribosomal subunit.

Functionally, involved in the binding of tRNA to the ribosomes. In Lachnoclostridium phytofermentans (strain ATCC 700394 / DSM 18823 / ISDg) (Clostridium phytofermentans), this protein is Small ribosomal subunit protein uS10.